The chain runs to 122 residues: Large ribosomal subunit protein uL14 (122 aa).

This sequence belongs to the universal ribosomal protein uL14 family. Part of the 50S ribosomal subunit. Forms a cluster with proteins L3 and L19. In the 70S ribosome, L14 and L19 interact and together make contacts with the 16S rRNA in bridges B5 and B8.

In terms of biological role, binds to 23S rRNA. Forms part of two intersubunit bridges in the 70S ribosome. The chain is Large ribosomal subunit protein uL14 from Campylobacter concisus (strain 13826).